The chain runs to 367 residues: UDP-N-acetylglucosamine--N-acetylmuramyl-(pentapeptide) pyrophosphoryl-undecaprenol N-acetylglucosamine transferase (367 aa).

UDP-N-acetyl-alpha-D-glucosamine contacts are provided by residues 15 to 17 (TGG), Asn127, Arg163, Ser191, Ile249, and Gln294.

Belongs to the glycosyltransferase 28 family. MurG subfamily.

It localises to the cell inner membrane. It catalyses the reaction di-trans,octa-cis-undecaprenyl diphospho-N-acetyl-alpha-D-muramoyl-L-alanyl-D-glutamyl-meso-2,6-diaminopimeloyl-D-alanyl-D-alanine + UDP-N-acetyl-alpha-D-glucosamine = di-trans,octa-cis-undecaprenyl diphospho-[N-acetyl-alpha-D-glucosaminyl-(1-&gt;4)]-N-acetyl-alpha-D-muramoyl-L-alanyl-D-glutamyl-meso-2,6-diaminopimeloyl-D-alanyl-D-alanine + UDP + H(+). The protein operates within cell wall biogenesis; peptidoglycan biosynthesis. Functionally, cell wall formation. Catalyzes the transfer of a GlcNAc subunit on undecaprenyl-pyrophosphoryl-MurNAc-pentapeptide (lipid intermediate I) to form undecaprenyl-pyrophosphoryl-MurNAc-(pentapeptide)GlcNAc (lipid intermediate II). This Burkholderia pseudomallei (strain 1106a) protein is UDP-N-acetylglucosamine--N-acetylmuramyl-(pentapeptide) pyrophosphoryl-undecaprenol N-acetylglucosamine transferase.